The sequence spans 273 residues: Dermonecrotic toxin LhSicTox-alphaIA2aii (273 aa).

H5 is an active-site residue. E25 and D27 together coordinate Mg(2+). H41 acts as the Nucleophile in catalysis. 2 disulfides stabilise this stretch: C45/C51 and C47/C190. D85 contributes to the Mg(2+) binding site.

It belongs to the arthropod phospholipase D family. Class II subfamily. The cofactor is Mg(2+). Expressed by the venom gland.

The protein localises to the secreted. The catalysed reaction is an N-(acyl)-sphingosylphosphocholine = an N-(acyl)-sphingosyl-1,3-cyclic phosphate + choline. The enzyme catalyses an N-(acyl)-sphingosylphosphoethanolamine = an N-(acyl)-sphingosyl-1,3-cyclic phosphate + ethanolamine. It carries out the reaction a 1-acyl-sn-glycero-3-phosphocholine = a 1-acyl-sn-glycero-2,3-cyclic phosphate + choline. It catalyses the reaction a 1-acyl-sn-glycero-3-phosphoethanolamine = a 1-acyl-sn-glycero-2,3-cyclic phosphate + ethanolamine. In terms of biological role, dermonecrotic toxins cleave the phosphodiester linkage between the phosphate and headgroup of certain phospholipids (sphingolipid and lysolipid substrates), forming an alcohol (often choline) and a cyclic phosphate. This toxin acts on sphingomyelin (SM). It may also act on ceramide phosphoethanolamine (CPE), lysophosphatidylcholine (LPC) and lysophosphatidylethanolamine (LPE), but not on lysophosphatidylserine (LPS), and lysophosphatidylglycerol (LPG). It acts by transphosphatidylation, releasing exclusively cyclic phosphate products as second products. Induces dermonecrosis, hemolysis, increased vascular permeability, edema, inflammatory response, and platelet aggregation. The protein is Dermonecrotic toxin LhSicTox-alphaIA2aii of Loxosceles hirsuta (Recluse spider).